A 547-amino-acid polypeptide reads, in one-letter code: Chaperonin GroEL (547 aa).

Residues 30–33, K51, 87–91, G415, 479–481, and D495 contribute to the ATP site; these read TLGP, DGTTT, and NAA. Positions 524–547 are disordered; it reads APKKDEPTPPAAGGGMGGMGGMDF. Gly residues predominate over residues 535-547; sequence AGGGMGGMGGMDF.

Belongs to the chaperonin (HSP60) family. Forms a cylinder of 14 subunits composed of two heptameric rings stacked back-to-back. Interacts with the co-chaperonin GroES.

The protein resides in the cytoplasm. It catalyses the reaction ATP + H2O + a folded polypeptide = ADP + phosphate + an unfolded polypeptide.. Together with its co-chaperonin GroES, plays an essential role in assisting protein folding. The GroEL-GroES system forms a nano-cage that allows encapsulation of the non-native substrate proteins and provides a physical environment optimized to promote and accelerate protein folding. The polypeptide is Chaperonin GroEL (Xylella fastidiosa (strain M23)).